The chain runs to 366 residues: Spermidine/putrescine import ATP-binding protein PotA (366 aa).

One can recognise an ABC transporter domain in the interval 8–239 (IRFENVTKQF…PINKFVADFI (232 aa)). Residue 41 to 48 (GPSGCGKT) participates in ATP binding.

Belongs to the ABC transporter superfamily. Spermidine/putrescine importer (TC 3.A.1.11.1) family. The complex is composed of two ATP-binding proteins (PotA), two transmembrane proteins (PotB and PotC) and a solute-binding protein (PotD).

Its subcellular location is the cell membrane. The enzyme catalyses ATP + H2O + polyamine-[polyamine-binding protein]Side 1 = ADP + phosphate + polyamineSide 2 + [polyamine-binding protein]Side 1.. Part of the ABC transporter complex PotABCD involved in spermidine/putrescine import. Responsible for energy coupling to the transport system. The sequence is that of Spermidine/putrescine import ATP-binding protein PotA from Listeria monocytogenes serovar 1/2a (strain ATCC BAA-679 / EGD-e).